We begin with the raw amino-acid sequence, 932 residues long: 2-oxoglutarate dehydrogenase E1 component (932 aa).

Belongs to the alpha-ketoglutarate dehydrogenase family. As to quaternary structure, homodimer. Part of the 2-oxoglutarate dehydrogenase (OGDH) complex composed of E1 (2-oxoglutarate dehydrogenase), E2 (dihydrolipoamide succinyltransferase) and E3 (dihydrolipoamide dehydrogenase); the complex contains multiple copies of the three enzymatic components (E1, E2 and E3). The cofactor is thiamine diphosphate.

The catalysed reaction is N(6)-[(R)-lipoyl]-L-lysyl-[protein] + 2-oxoglutarate + H(+) = N(6)-[(R)-S(8)-succinyldihydrolipoyl]-L-lysyl-[protein] + CO2. Functionally, E1 component of the 2-oxoglutarate dehydrogenase (OGDH) complex which catalyzes the decarboxylation of 2-oxoglutarate, the first step in the conversion of 2-oxoglutarate to succinyl-CoA and CO(2). The polypeptide is 2-oxoglutarate dehydrogenase E1 component (Staphylococcus aureus (strain bovine RF122 / ET3-1)).